The primary structure comprises 531 residues: Peptide chain release factor 3 (531 aa).

In terms of domain architecture, tr-type G spans 13-282; sequence SKRRTFAIIS…GLTQWAPSPM (270 aa). Residues 22-29, 90-94, and 144-147 each bind GTP; these read SHPDAGKT, DTPGH, and NKLD.

Belongs to the TRAFAC class translation factor GTPase superfamily. Classic translation factor GTPase family. PrfC subfamily.

It is found in the cytoplasm. Increases the formation of ribosomal termination complexes and stimulates activities of RF-1 and RF-2. It binds guanine nucleotides and has strong preference for UGA stop codons. It may interact directly with the ribosome. The stimulation of RF-1 and RF-2 is significantly reduced by GTP and GDP, but not by GMP. The polypeptide is Peptide chain release factor 3 (Vibrio cholerae serotype O1 (strain ATCC 39541 / Classical Ogawa 395 / O395)).